A 359-amino-acid polypeptide reads, in one-letter code: Phosphate acyltransferase (359 aa).

It belongs to the PlsX family. In terms of assembly, homodimer. Probably interacts with PlsY.

The protein resides in the cytoplasm. It carries out the reaction a fatty acyl-[ACP] + phosphate = an acyl phosphate + holo-[ACP]. Its pathway is lipid metabolism; phospholipid metabolism. In terms of biological role, catalyzes the reversible formation of acyl-phosphate (acyl-PO(4)) from acyl-[acyl-carrier-protein] (acyl-ACP). This enzyme utilizes acyl-ACP as fatty acyl donor, but not acyl-CoA. This is Phosphate acyltransferase from Koribacter versatilis (strain Ellin345).